We begin with the raw amino-acid sequence, 62 residues long: Photosystem II reaction center protein Z (62 aa).

Helical transmembrane passes span 8–28 and 41–61; these read LIAA…VVFS and WGGA…SIVV.

This sequence belongs to the PsbZ family. PSII is composed of 1 copy each of membrane proteins PsbA, PsbB, PsbC, PsbD, PsbE, PsbF, PsbH, PsbI, PsbJ, PsbK, PsbL, PsbM, PsbT, PsbX, PsbY, PsbZ, Psb30/Ycf12, peripheral proteins PsbO, CyanoQ (PsbQ), PsbU, PsbV and a large number of cofactors. It forms dimeric complexes.

The protein resides in the cellular thylakoid membrane. May control the interaction of photosystem II (PSII) cores with the light-harvesting antenna, regulates electron flow through the 2 photosystem reaction centers. PSII is a light-driven water plastoquinone oxidoreductase, using light energy to abstract electrons from H(2)O, generating a proton gradient subsequently used for ATP formation. This is Photosystem II reaction center protein Z from Acaryochloris marina (strain MBIC 11017).